The following is a 228-amino-acid chain: Aquaporin Z (228 aa).

The next 5 membrane-spanning stretches (helical) occupy residues 1-21 (MLNKLSAEFFGTFWLVFGGCG), 46-66 (TVLTMAYAVGGISGGHFNPAV), 82-102 (IPYWVAQVLGAIATAAILYVI), 129-149 (MMAGLLIEIILTAFFIIIILG), and 154-174 (LAPAGFAPIAIGFGLTLIHLV). The short motif at 63–65 (NPA) is the NPA 1 element. Residues 184 to 186 (NPA) carry the NPA 2 motif. Residues 205–225 (LFWVAPLVGAVIGAIIWKGLL) traverse the membrane as a helical segment.

Belongs to the MIP/aquaporin (TC 1.A.8) family. As to quaternary structure, homotetramer.

It localises to the cell inner membrane. It catalyses the reaction H2O(in) = H2O(out). Its function is as follows. Channel that permits osmotically driven movement of water in both directions. It is involved in the osmoregulation and in the maintenance of cell turgor during volume expansion in rapidly growing cells. It mediates rapid entry or exit of water in response to abrupt changes in osmolarity. The chain is Aquaporin Z from Brucella suis biovar 1 (strain 1330).